The following is a 452-amino-acid chain: Packaging protein 1 (452 aa).

The interval 1-78 (MLPCRSTGRR…AKPPQRGSLL (78 aa)) is disordered. 173–180 (GPTGCGKS) contributes to the ATP binding site. A DNA-binding region spans residues 442-452 (RAYHVRKNKYQ).

The protein belongs to the adenoviridae packaging protein 1 family. Homodimer. Part of a genome packaging complex composed of packaging proteins 1, 2 and 3; this complex specifically binds to the packaging sequence on the left end of viral genomic DNA and performs packaging of the viral genome. Interacts with protein 33K.

The protein resides in the virion. The protein localises to the host nucleus. It localises to the host nucleoplasm. It is found in the host nucleolus. Component of the packaging machinery which encapsidates the viral DNA into preformed capsids and transcriptional activator of the viral major late promoter (MLP). Binds, along with packaging proteins 2 and 3, to the specific packaging sequence on the left end of viral genomic DNA and displays ATPase activity thereby providing the power stroke of the packaging machinery. The activity of packaging protein IVa2 is stimulated by protein 33K which acts as a terminase. May be the protein that pumps DNA into the capsid powered by ATP hydrolysis. Specifically binds to the 5'-CG-3' nucleotides of the repeats making up the packaging sequence. Component of the DEF-A and DEF-B transcription factors that bind downstream elements of the major late promoter (MLP), and stimulate transcription from the MLP after initiation of viral DNA replication. DEF-A is a heterodimer packaging proteins 1 and 2 and DEF-B is a homodimer of packaging protein 1. This is Packaging protein 1 from Homo sapiens (Human).